The following is a 607-amino-acid chain: MGKYQVMKRASEVDLSTVKYKAETMKAPHLTGLSFKLFVNLLEAPLIGSLIVDYLKKDNGMTKIFRNTVIPEEPMFRPEFPSQEPEHDVVIVGEDESPIDRLETALKCLPQYDPSRSLHADPVSSFRYWKIRDYAYAYRSKLTTPLQVAKRIISIIEEFGYDKPPTPFLIRFDANEVIKQAEASTRRFEQGNPISVLDGIFVTIKDDIDCLPHPTNGGTTWLHEDRSVEKDSAVVSKLRSCGAILLGKANMHELGMGTTGNNSNYGTTRNPHDPKRYTGGSSSGSAAIVAAGLCSAALGTDGGGSVRIPSALCGITGLKTTYGRTDMTGSLCEGGTVEIIGPLASSLEDAFLVYAAILGSSSADRYNLKPSPPCFPKLLSHNGSNAIGSLRLGKYTKWFNDVSSSDISDKCEDILKLLSNNHGCKVVEIVVPELEEMRAAHVISIGSPTLSSLTPYCEAGKNSKLSYDTRTSFAIFRSFSASDYIAAQCLRRRLMEYHLNIFKDVDVIVTPTTGMTAPVIPPDALKNGETNIQVTTDLMRFVLAANLLGFPAISVPVGYDKEGLPIGLQIMGRPWAEATVLGLAAAVEELAPVTKKPAIFYDILNTN.

Residues lysine 205 and serine 281 each act as charge relay system in the active site. 302–305 is a binding site for substrate; sequence GGGS. Catalysis depends on serine 305, which acts as the Acyl-ester intermediate.

The protein belongs to the amidase family. In terms of assembly, forms homodimers. As to expression, expressed in roots, leaves and flowers. Expressed in seedlings, flowers, roots, siliques, seeds and leaves.

The protein resides in the endoplasmic reticulum membrane. It localises to the cell membrane. The enzyme catalyses N-(5Z,8Z,11Z,14Z-eicosatetraenoyl)-ethanolamine + H2O = ethanolamine + (5Z,8Z,11Z,14Z)-eicosatetraenoate. It catalyses the reaction N-(9Z,12Z-octadecadienoyl)-ethanolamine + H2O = ethanolamine + (9Z,12Z)-octadecadienoate. It carries out the reaction N-hexadecanoylethanolamine + H2O = ethanolamine + hexadecanoate. The catalysed reaction is N-tetradecanoylethanolamine + H2O = tetradecanoate + ethanolamine. The enzyme catalyses N-dodecanoylethanolamine + H2O = dodecanoate + ethanolamine. Inhibited by methyl arachidonyl fluorophosphonate (MAFP). Functionally, catalyzes the hydrolysis of bioactive endogenous fatty acid amides to their corresponding acids. The hydrolysis of endogenous amidated lipids terminates their participation as lipid mediators in various signaling systems. Converts a wide range of N-acylethanolamines (NAEs) to their corresponding free fatty acids and ethanolamine. Can use oleamide as substrate, but not indole-3-acetamide, 1-naphtalene-acetamide, nicotinic acid amide or L-asparagine. Can use 2-arachidonylglycerol as substrate. Participates in the regulation of plant growth. Hydrolyzes N-dodecanoylethanolamine, which is has a growth inhibitory effect on seedling growth. Involved in plant defense signaling. Involved in abscisic acid (ABA) signaling through mechanisms that are independent of the catalytic activity. Involved in the regulation of flowering time. Catalyzes the hydrolysis of N-acyl L-homoserine lactones (AHLs), which are a class of signaling molecules produced by bacteria for quorum sensing. Accumulation of L-homoserine appears to encourage plant growth at low concentrations by stimulating transpiration, but higher concentrations inhibit growth by stimulating ethylene production. This chain is Fatty acid amide hydrolase, found in Arabidopsis thaliana (Mouse-ear cress).